A 362-amino-acid polypeptide reads, in one-letter code: Forkhead box protein F (362 aa).

The interval 19–70 is disordered; the sequence is LDSTAPNNSHRTIKAENYFNEDEEDYNENSHEDSEDSKEDSDGQGCRSRKRK. Residues 37 to 57 show a composition bias toward acidic residues; the sequence is FNEDEEDYNENSHEDSEDSKE. Positions 72 to 169 form a DNA-binding region, fork-head; it reads KPPFSYIALI…EENGFRRRPR (98 aa).

Its subcellular location is the nucleus. Its function is as follows. Transcription factor that is required for cell fate of coelomocytes which are non-muscle mesodermal cells. Acts in concert with, and by activating expression of, the homeodomain gene ceh-34. Binds to the sequence motif 5'-ATAAA[T/C]A-3'. This chain is Forkhead box protein F, found in Caenorhabditis elegans.